The sequence spans 124 residues: Transcription initiation factor TFIID subunit 13 (124 aa).

Residues M1–E16 show a composition bias toward acidic residues. The interval M1–R28 is disordered. The Histone-fold domain occupies F32–S74.

The protein belongs to the TAF13 family. In terms of assembly, component of the TFIID basal transcription factor complex, composed of TATA-box-binding protein TBP, and a number of TBP-associated factors (TAFs), including TAF1, TAF2, TAF3, TAF4, TAF5, TAF6, TAF7, TAF8, TAF9, TAF10, TAF11, TAF12 and TAF13. Interacts with TBP, and more strongly with TAF10 and TAF11.

It is found in the nucleus. Functionally, the TFIID basal transcription factor complex plays a major role in the initiation of RNA polymerase II (Pol II)-dependent transcription. TFIID recognizes and binds promoters via its subunit TBP, a TATA-box-binding protein, and promotes assembly of the pre-initiation complex (PIC). The TFIID complex consists of TBP and TBP-associated factors (TAFs), including TAF1, TAF2, TAF3, TAF4, TAF5, TAF6, TAF7, TAF8, TAF9, TAF10, TAF11, TAF12 and TAF13. TAF13, together with TAF11 and TBP, play key roles during promoter binding by the TFIID and TFIIA transcription factor complexes. This is Transcription initiation factor TFIID subunit 13 from Bos taurus (Bovine).